Reading from the N-terminus, the 291-residue chain is Small ribosomal subunit biogenesis GTPase RsgA (291 aa).

The CP-type G domain maps to 63–221 (HNELKRPPVS…IADTPGFSAL (159 aa)). GTP is bound by residues 112–115 (TKKD) and 164–172 (GQSGVGKST). Positions 245, 250, 252, and 258 each coordinate Zn(2+).

The protein belongs to the TRAFAC class YlqF/YawG GTPase family. RsgA subfamily. As to quaternary structure, monomer. Associates with 30S ribosomal subunit, binds 16S rRNA. Zn(2+) serves as cofactor.

It is found in the cytoplasm. Its function is as follows. One of several proteins that assist in the late maturation steps of the functional core of the 30S ribosomal subunit. Helps release RbfA from mature subunits. May play a role in the assembly of ribosomal proteins into the subunit. Circularly permuted GTPase that catalyzes slow GTP hydrolysis, GTPase activity is stimulated by the 30S ribosomal subunit. This is Small ribosomal subunit biogenesis GTPase RsgA from Staphylococcus haemolyticus (strain JCSC1435).